The following is an 896-amino-acid chain: Protein translocase subunit SecA (896 aa).

ATP is bound by residues Gln87, 105 to 109, and Asp507; that span reads GEGKT. Positions 855 to 879 are disordered; it reads LSENDEASETQTFRRQEKKIGRNDP. Residues 866-876 show a composition bias toward basic and acidic residues; sequence TFRRQEKKIGR. The Zn(2+) site is built by Cys880, Cys882, Cys891, and His892.

This sequence belongs to the SecA family. In terms of assembly, monomer and homodimer. Part of the essential Sec protein translocation apparatus which comprises SecA, SecYEG and auxiliary proteins SecDF-YajC and YidC. It depends on Zn(2+) as a cofactor.

It localises to the cell inner membrane. Its subcellular location is the cytoplasm. It catalyses the reaction ATP + H2O + cellular proteinSide 1 = ADP + phosphate + cellular proteinSide 2.. Part of the Sec protein translocase complex. Interacts with the SecYEG preprotein conducting channel. Has a central role in coupling the hydrolysis of ATP to the transfer of proteins into and across the cell membrane, serving both as a receptor for the preprotein-SecB complex and as an ATP-driven molecular motor driving the stepwise translocation of polypeptide chains across the membrane. The sequence is that of Protein translocase subunit SecA from Legionella pneumophila (strain Lens).